A 351-amino-acid chain; its full sequence is uncharacterized protein (351 aa).

Aspartate 215, aspartate 226, histidine 290, glutamate 319, and glutamate 333 together coordinate Mn(2+).

It belongs to the peptidase M24B family. The cofactor is Mn(2+).

This is an uncharacterized protein from Staphylococcus aureus (strain MW2).